Reading from the N-terminus, the 72-residue chain is Large ribosomal subunit protein uL29 (72 aa).

This sequence belongs to the universal ribosomal protein uL29 family.

This chain is Large ribosomal subunit protein uL29, found in Rhodopirellula baltica (strain DSM 10527 / NCIMB 13988 / SH1).